Reading from the N-terminus, the 489-residue chain is Valine--tRNA ligase (489 aa).

The 'KMSKS' region motif lies at 482–486; the sequence is KMSKS. Position 485 (Lys485) interacts with ATP.

It belongs to the class-I aminoacyl-tRNA synthetase family.

The enzyme catalyses tRNA(Val) + L-valine + ATP = L-valyl-tRNA(Val) + AMP + diphosphate. This chain is Valine--tRNA ligase (VALS), found in Trichomonas vaginalis.